A 394-amino-acid polypeptide reads, in one-letter code: S-adenosylmethionine synthase (394 aa).

His15 contacts ATP. Residue Asp17 participates in Mg(2+) binding. A K(+)-binding site is contributed by Glu43. L-methionine-binding residues include Glu56 and Gln99. The tract at residues 99–109 (QSPDIALGVNK) is flexible loop. ATP is bound by residues 173–175 (DGK), 239–240 (RF), Asp248, 254–255 (RK), Ala271, and Lys275. Asp248 serves as a coordination point for L-methionine. Position 279 (Lys279) interacts with L-methionine.

Belongs to the AdoMet synthase family. As to quaternary structure, homotetramer; dimer of dimers. It depends on Mg(2+) as a cofactor. K(+) serves as cofactor.

The protein localises to the cytoplasm. It carries out the reaction L-methionine + ATP + H2O = S-adenosyl-L-methionine + phosphate + diphosphate. Its pathway is amino-acid biosynthesis; S-adenosyl-L-methionine biosynthesis; S-adenosyl-L-methionine from L-methionine: step 1/1. Its function is as follows. Catalyzes the formation of S-adenosylmethionine (AdoMet) from methionine and ATP. The overall synthetic reaction is composed of two sequential steps, AdoMet formation and the subsequent tripolyphosphate hydrolysis which occurs prior to release of AdoMet from the enzyme. The sequence is that of S-adenosylmethionine synthase from Kosmotoga olearia (strain ATCC BAA-1733 / DSM 21960 / TBF 19.5.1).